The following is a 325-amino-acid chain: Protein TMED8 (325 aa).

The interval 1–78 (MSDLQAAEGP…MVSPVSKDAT (78 aa)) is disordered. Residues 159–323 (PPCIWTFAKV…NKTLYFHIYY (165 aa)) form the GOLD domain. K169 carries the post-translational modification N6-acetyllysine. The segment at 232–267 (TVQVSDSSDDEDEEEEEEEEIEEPVPAGDVERGSRS) is disordered. Acidic residues predominate over residues 238-254 (SSDDEDEEEEEEEEIEE).

The polypeptide is Protein TMED8 (TMED8) (Homo sapiens (Human)).